A 313-amino-acid polypeptide reads, in one-letter code: 4-diphosphocytidyl-2-C-methyl-D-erythritol kinase (313 aa).

Lys27 is an active-site residue. Pro110 to Ser120 contributes to the ATP binding site. Asp152 is a catalytic residue.

The protein belongs to the GHMP kinase family. IspE subfamily.

It catalyses the reaction 4-CDP-2-C-methyl-D-erythritol + ATP = 4-CDP-2-C-methyl-D-erythritol 2-phosphate + ADP + H(+). The protein operates within isoprenoid biosynthesis; isopentenyl diphosphate biosynthesis via DXP pathway; isopentenyl diphosphate from 1-deoxy-D-xylulose 5-phosphate: step 3/6. Catalyzes the phosphorylation of the position 2 hydroxy group of 4-diphosphocytidyl-2C-methyl-D-erythritol. The protein is 4-diphosphocytidyl-2-C-methyl-D-erythritol kinase of Histophilus somni (strain 129Pt) (Haemophilus somnus).